The primary structure comprises 251 residues: 5-oxoprolinase subunit A (251 aa).

It belongs to the LamB/PxpA family. Forms a complex composed of PxpA, PxpB and PxpC.

The enzyme catalyses 5-oxo-L-proline + ATP + 2 H2O = L-glutamate + ADP + phosphate + H(+). Functionally, catalyzes the cleavage of 5-oxoproline to form L-glutamate coupled to the hydrolysis of ATP to ADP and inorganic phosphate. This chain is 5-oxoprolinase subunit A, found in Vibrio parahaemolyticus serotype O3:K6 (strain RIMD 2210633).